Here is an 81-residue protein sequence, read N- to C-terminus: Photosystem I iron-sulfur center (81 aa).

4Fe-4S ferredoxin-type domains are found at residues Ser-2–Trp-31 and Gly-37–Tyr-68. Positions 11, 14, 17, 21, 48, 51, 54, and 58 each coordinate [4Fe-4S] cluster.

In terms of assembly, the cyanobacterial PSI reaction center is composed of one copy each of PsaA,B,C,D,E,F,I,J,K,L,M and X, and forms trimeric complexes. [4Fe-4S] cluster serves as cofactor.

Its subcellular location is the cellular thylakoid membrane. It carries out the reaction reduced [plastocyanin] + hnu + oxidized [2Fe-2S]-[ferredoxin] = oxidized [plastocyanin] + reduced [2Fe-2S]-[ferredoxin]. Functionally, apoprotein for the two 4Fe-4S centers FA and FB of photosystem I (PSI); essential for photochemical activity. FB is the terminal electron acceptor of PSI, donating electrons to ferredoxin. The C-terminus interacts with PsaA/B/D and helps assemble the protein into the PSI complex. Required for binding of PsaD and PsaE to PSI. PSI is a plastocyanin/cytochrome c6-ferredoxin oxidoreductase, converting photonic excitation into a charge separation, which transfers an electron from the donor P700 chlorophyll pair to the spectroscopically characterized acceptors A0, A1, FX, FA and FB in turn. The chain is Photosystem I iron-sulfur center from Prochlorococcus marinus (strain SARG / CCMP1375 / SS120).